Here is an 878-residue protein sequence, read N- to C-terminus: Protein translocase subunit SecA (878 aa).

ATP-binding positions include glutamine 79, 97–101, and aspartate 487; that span reads GEGKT.

Belongs to the SecA family.

The protein localises to the plastid. It localises to the chloroplast stroma. Its subcellular location is the chloroplast thylakoid membrane. It catalyses the reaction ATP + H2O + cellular proteinSide 1 = ADP + phosphate + cellular proteinSide 2.. Has a central role in coupling the hydrolysis of ATP to the transfer of proteins across the thylakoid membrane. This is Protein translocase subunit SecA from Antithamnion sp. (Red alga).